Reading from the N-terminus, the 877-residue chain is Alanine--tRNA ligase (877 aa).

Positions 561, 565, 669, and 673 each coordinate Zn(2+).

The protein belongs to the class-II aminoacyl-tRNA synthetase family. Zn(2+) serves as cofactor.

The protein localises to the cytoplasm. It carries out the reaction tRNA(Ala) + L-alanine + ATP = L-alanyl-tRNA(Ala) + AMP + diphosphate. In terms of biological role, catalyzes the attachment of alanine to tRNA(Ala) in a two-step reaction: alanine is first activated by ATP to form Ala-AMP and then transferred to the acceptor end of tRNA(Ala). Also edits incorrectly charged Ser-tRNA(Ala) and Gly-tRNA(Ala) via its editing domain. The polypeptide is Alanine--tRNA ligase (Endomicrobium trichonymphae).